A 127-amino-acid chain; its full sequence is Glycine cleavage system H protein (127 aa).

The Lipoyl-binding domain occupies 24 to 105 (TLTVGVTDHA…AYAAWLFKLK (82 aa)). Residue Lys-65 is modified to N6-lipoyllysine.

The protein belongs to the GcvH family. As to quaternary structure, the glycine cleavage system is composed of four proteins: P, T, L and H. Requires (R)-lipoate as cofactor.

Its function is as follows. The glycine cleavage system catalyzes the degradation of glycine. The H protein shuttles the methylamine group of glycine from the P protein to the T protein. The chain is Glycine cleavage system H protein from Azoarcus sp. (strain BH72).